A 322-amino-acid chain; its full sequence is Ribonuclease Z (322 aa).

Positions 60, 62, 64, 65, 140, 210, and 270 each coordinate Zn(2+). The active-site Proton acceptor is aspartate 64.

Belongs to the RNase Z family. In terms of assembly, homodimer. Requires Zn(2+) as cofactor.

It carries out the reaction Endonucleolytic cleavage of RNA, removing extra 3' nucleotides from tRNA precursor, generating 3' termini of tRNAs. A 3'-hydroxy group is left at the tRNA terminus and a 5'-phosphoryl group is left at the trailer molecule.. Functionally, zinc phosphodiesterase, which displays some tRNA 3'-processing endonuclease activity. Probably involved in tRNA maturation, by removing a 3'-trailer from precursor tRNA. This is Ribonuclease Z from Methanococcus aeolicus (strain ATCC BAA-1280 / DSM 17508 / OCM 812 / Nankai-3).